The sequence spans 382 residues: Putative glutamate--cysteine ligase 2-1 (382 aa).

It belongs to the glutamate--cysteine ligase type 2 family. YbdK subfamily.

It catalyses the reaction L-cysteine + L-glutamate + ATP = gamma-L-glutamyl-L-cysteine + ADP + phosphate + H(+). Functionally, ATP-dependent carboxylate-amine ligase which exhibits weak glutamate--cysteine ligase activity. This Frankia casuarinae (strain DSM 45818 / CECT 9043 / HFP020203 / CcI3) protein is Putative glutamate--cysteine ligase 2-1.